A 149-amino-acid chain; its full sequence is Pleckstrin homology domain-containing family J member 1 (149 aa).

The 94-residue stretch at 15-108 (PAEMAAELGM…WMAALRQASY (94 aa)) folds into the PH domain.

The chain is Pleckstrin homology domain-containing family J member 1 (PLEKHJ1) from Bos taurus (Bovine).